A 173-amino-acid polypeptide reads, in one-letter code: MQTPPVKDGPRINDEIRVPRVLLIDQHGEKQGEMPTASAMEAAEEAGLDLVEIVPNANPPVCKILDYGKFKFQEQKKKNEARKRQKVVELKEIKLRPNIDSHDYDVKAKAMHRFFEEGDKVKVTLRFRGREMAHPELGMKLLQKVKADFDEVAKVEYEPRMEGRQMIMILAPR.

This sequence belongs to the IF-3 family. In terms of assembly, monomer.

The protein resides in the cytoplasm. In terms of biological role, IF-3 binds to the 30S ribosomal subunit and shifts the equilibrium between 70S ribosomes and their 50S and 30S subunits in favor of the free subunits, thus enhancing the availability of 30S subunits on which protein synthesis initiation begins. This Caulobacter vibrioides (strain ATCC 19089 / CIP 103742 / CB 15) (Caulobacter crescentus) protein is Translation initiation factor IF-3.